We begin with the raw amino-acid sequence, 354 residues long: Uroporphyrinogen decarboxylase (354 aa).

Residues 27 to 31 (RQAGR), D77, Y154, T209, and H327 each bind substrate.

Belongs to the uroporphyrinogen decarboxylase family. As to quaternary structure, homodimer.

Its subcellular location is the cytoplasm. It catalyses the reaction uroporphyrinogen III + 4 H(+) = coproporphyrinogen III + 4 CO2. Its pathway is porphyrin-containing compound metabolism; protoporphyrin-IX biosynthesis; coproporphyrinogen-III from 5-aminolevulinate: step 4/4. Its function is as follows. Catalyzes the decarboxylation of four acetate groups of uroporphyrinogen-III to yield coproporphyrinogen-III. In Shigella dysenteriae serotype 1 (strain Sd197), this protein is Uroporphyrinogen decarboxylase.